The following is a 644-amino-acid chain: Fidgetin-like protein 2 (644 aa).

2 disordered regions span residues 1-36 (MHWTPEHAQPLNQWPEQHLDVSSTTPSPAHKLELPP) and 285-323 (AADGASYPAADDTECRGNGFRSKPPGATEDGTGKYGGGG). Over residues 10–27 (PLNQWPEQHLDVSSTTPS) the composition is skewed to polar residues. Over residues 285-294 (AADGASYPAA) the composition is skewed to low complexity. ATP-binding positions include alanine 390 and 430-435 (GCGKAL).

The protein belongs to the AAA ATPase family. It depends on Mg(2+) as a cofactor.

The protein localises to the cytoplasm. The protein resides in the cell cortex. The catalysed reaction is ATP + H2O = ADP + phosphate + H(+). In terms of biological role, microtubule-severing enzyme that negatively regulates cell migration and wound healing. In migrating cells, targets dynamic microtubules (MTs) at the leading edge and severs them, thereby suppressing motility. Microtubule severing releases ARHGEF2 which activates RHOA, which in turn regulates focal ahesion turnover via focal adhesion kinase, as opposed to F-actin polymerization, to suppress cell motility. Negative regulator of axon regeneration that suppresses axonal growth by selectively severing dynamic MTs in the distal axon shaft and growth cone. Contributes to proper cell branching during endothelial and neuronal development. This is Fidgetin-like protein 2 (Fignl2) from Mus musculus (Mouse).